We begin with the raw amino-acid sequence, 692 residues long: Transcription factor steA (692 aa).

The DNA-binding element occupies 56 to 165; sequence DQLIRRFLLP…SVPHDRLFLD (110 aa). Disordered stretches follow at residues 406–507 and 519–540; these read SPTY…EQSS and LPAN…SDRY. Positions 470–482 are enriched in polar residues; sequence RSVNSTYTATLPQ. C2H2-type zinc fingers lie at residues 564–588 and 594–616; these read HSCP…VRTH and YPCP…RRIH. A disordered region spans residues 618–665; sequence AQQDGQPLVHEDDLENDDNESVSHDEDESPSESVHPAVPGVHGMTSMP. Acidic residues predominate over residues 629 to 647; the sequence is DDLENDDNESVSHDEDESP.

Belongs to the STE12 transcription factor family.

It localises to the nucleus. Its function is as follows. Transcription factor involved in sexual reproduction. Required for cleistothecial development and ascosporogenesis. Not required for asexual reproduction (conidiation). May act to repress medA expression. The sequence is that of Transcription factor steA (steA) from Emericella nidulans (strain FGSC A4 / ATCC 38163 / CBS 112.46 / NRRL 194 / M139) (Aspergillus nidulans).